The following is a 131-amino-acid chain: Bacteriohemerythrin (131 aa).

7 residues coordinate Fe cation: His-22, His-58, Glu-62, His-77, His-81, His-117, and Asp-122.

It belongs to the hemerythrin family. As to quaternary structure, monomer.

In terms of biological role, oxygen-binding protein. May be involved in a storage mechanism or for delivery to oxygen-requiring enzymes. The oxygen-binding site contains two iron atoms. In Methylococcus capsulatus (strain ATCC 33009 / NCIMB 11132 / Bath), this protein is Bacteriohemerythrin.